A 94-amino-acid polypeptide reads, in one-letter code: MRAFAVLLIIALGWLQYTLWFGKNGMEDYAQVSNDVQLQEEVNQGLRNRNGQMFAEIDDLRKGSAAIEERARHELGMIKKGETFYRIIDENSEE.

Residues 1–3 (MRA) are Cytoplasmic-facing. A helical transmembrane segment spans residues 4 to 21 (FAVLLIIALGWLQYTLWF). The Periplasmic segment spans residues 22-94 (GKNGMEDYAQ…YRIIDENSEE (73 aa)). Positions 40 to 60 (EEVNQGLRNRNGQMFAEIDDL) form a coiled coil.

The protein belongs to the FtsB family. Part of a complex composed of FtsB, FtsL and FtsQ.

It localises to the cell inner membrane. Its function is as follows. Essential cell division protein. May link together the upstream cell division proteins, which are predominantly cytoplasmic, with the downstream cell division proteins, which are predominantly periplasmic. This chain is Cell division protein FtsB, found in Aliivibrio salmonicida (strain LFI1238) (Vibrio salmonicida (strain LFI1238)).